The chain runs to 347 residues: Cell shape-determining protein MreB (347 aa).

ATP is bound by residues threonine 19–asparagine 21, glycine 165–threonine 167, glutamate 213–lysine 216, and glycine 295–leucine 298.

Belongs to the FtsA/MreB family. In terms of assembly, forms polymers in the presence of ATP. Forms pairs of protofilaments that adopt an antiparallel arrangement and bind to lipids.

Its subcellular location is the cytoplasm. Its function is as follows. Forms membrane-associated dynamic filaments that are essential for cell shape determination. Acts by regulating cell wall synthesis and cell elongation, and thus cell shape. A feedback loop between cell geometry and MreB localization may maintain elongated cell shape by targeting cell wall growth to regions of negative cell wall curvature. Required for mid-cell peptidoglycan synthesis and cell division. Directs the localization of the cytosolic peptidoglycan precursor-synthesizing enzyme MurG. Also required for proper chromosome segregation. Directs the segregation of origin-proximal but not origin-distal loci. This is Cell shape-determining protein MreB from Caulobacter vibrioides (strain NA1000 / CB15N) (Caulobacter crescentus).